The primary structure comprises 423 residues: D-tagatose-1,6-bisphosphate aldolase subunit GatZ (423 aa).

Belongs to the GatZ/KbaZ family. GatZ subfamily. Forms a complex with GatY.

It functions in the pathway carbohydrate metabolism; D-tagatose 6-phosphate degradation; D-glyceraldehyde 3-phosphate and glycerone phosphate from D-tagatose 6-phosphate: step 2/2. Component of the tagatose-1,6-bisphosphate aldolase GatYZ that is required for full activity and stability of the Y subunit. Could have a chaperone-like function for the proper and stable folding of GatY. When expressed alone, GatZ does not show any aldolase activity. Is involved in the catabolism of galactitol. In Salmonella gallinarum (strain 287/91 / NCTC 13346), this protein is D-tagatose-1,6-bisphosphate aldolase subunit GatZ.